Consider the following 288-residue polypeptide: Nucleotide-binding protein Veis_1053 (288 aa).

Position 10–17 (10–17 (GMSGSGKS)) interacts with ATP. 59–62 (DVRS) is a binding site for GTP.

This sequence belongs to the RapZ-like family.

Displays ATPase and GTPase activities. The protein is Nucleotide-binding protein Veis_1053 of Verminephrobacter eiseniae (strain EF01-2).